The sequence spans 123 residues: Ribosome-binding factor A (123 aa).

It belongs to the RbfA family. As to quaternary structure, monomer. Binds 30S ribosomal subunits, but not 50S ribosomal subunits or 70S ribosomes.

Its subcellular location is the cytoplasm. Functionally, one of several proteins that assist in the late maturation steps of the functional core of the 30S ribosomal subunit. Associates with free 30S ribosomal subunits (but not with 30S subunits that are part of 70S ribosomes or polysomes). Required for efficient processing of 16S rRNA. May interact with the 5'-terminal helix region of 16S rRNA. The polypeptide is Ribosome-binding factor A (Koribacter versatilis (strain Ellin345)).